A 421-amino-acid polypeptide reads, in one-letter code: Enolase (421 aa).

Gln-165 serves as a coordination point for (2R)-2-phosphoglycerate. Glu-207 functions as the Proton donor in the catalytic mechanism. Residues Asp-244, Glu-285, and Asp-312 each contribute to the Mg(2+) site. Residues Lys-337, Arg-366, Ser-367, and Lys-388 each contribute to the (2R)-2-phosphoglycerate site. Residue Lys-337 is the Proton acceptor of the active site.

The protein belongs to the enolase family. Mg(2+) is required as a cofactor.

It localises to the cytoplasm. The protein localises to the secreted. The protein resides in the cell surface. The catalysed reaction is (2R)-2-phosphoglycerate = phosphoenolpyruvate + H2O. It participates in carbohydrate degradation; glycolysis; pyruvate from D-glyceraldehyde 3-phosphate: step 4/5. Functionally, catalyzes the reversible conversion of 2-phosphoglycerate (2-PG) into phosphoenolpyruvate (PEP). It is essential for the degradation of carbohydrates via glycolysis. This Ehrlichia chaffeensis (strain ATCC CRL-10679 / Arkansas) protein is Enolase.